We begin with the raw amino-acid sequence, 493 residues long: Aluminum-activated malate transporter 1 (493 aa).

A run of 5 helical transmembrane segments spans residues 28–48, 51–71, 104–124, 133–153, and 169–189; these read VGLA…GPFT, FGIN…FSVG, TVEP…STFV, KFDY…LSGF, and VVIG…VWAG. Phosphoserine occurs at positions 320 and 327. T385 carries the phosphothreonine modification. Residues 441 to 452 show a composition bias toward basic and acidic residues; the sequence is DNDRSNNVDDSR. A disordered region spans residues 441–460; sequence DNDRSNNVDDSRGGSSQDSC.

It belongs to the aromatic acid exporter (TC 2.A.85) family. In terms of processing, phosphorylated. A reversible phosphorylation is required for activation. As to expression, expressed in roots, but not in shoots. Detected in the root apex in absence of aluminum stress and in root apices, the stele and endodermis of the elongating zone of primary and lateral roots after aluminum stress. Not expressed in cortical and epidermal cells.

It localises to the cell membrane. Its activity is regulated as follows. Activated by external aluminum. Malate transporter critical for aluminum tolerance. The STOP1 transcription factor is required for ALMT1 expression. This chain is Aluminum-activated malate transporter 1 (ALMT1), found in Arabidopsis thaliana (Mouse-ear cress).